A 211-amino-acid polypeptide reads, in one-letter code: Dual specificity protein phosphatase 26 (211 aa).

One can recognise a Tyrosine-protein phosphatase domain in the interval 60 to 207 (NHADEVWPGL…LLALDRRLRQ (148 aa)). The Phosphocysteine intermediate role is filled by Cys-152.

The protein belongs to the protein-tyrosine phosphatase family. Non-receptor class dual specificity subfamily. As to quaternary structure, interacts with HSF4. Brain. In the brain it is expressed ubiquitously except in the hippocampus. Expressed in embryonal cancers (retinoblastoma, neuroepithilioma and neuroblastoma) and in anaplatic thyroid cancer.

It is found in the cytoplasm. The protein localises to the nucleus. It localises to the golgi apparatus. The catalysed reaction is O-phospho-L-tyrosyl-[protein] + H2O = L-tyrosyl-[protein] + phosphate. It carries out the reaction O-phospho-L-seryl-[protein] + H2O = L-seryl-[protein] + phosphate. It catalyses the reaction O-phospho-L-threonyl-[protein] + H2O = L-threonyl-[protein] + phosphate. Functionally, inactivates MAPK1 and MAPK3 which leads to dephosphorylation of heat shock factor protein 4 and a reduction in its DNA-binding activity. Inhibits MAP kinase p38 by dephosphorylating it and inhibits p38-mediated apoptosis in anaplastic thyroid cancer cells. Can also induce activation of MAP kinase p38 and c-Jun N-terminal kinase (JNK). The sequence is that of Dual specificity protein phosphatase 26 (DUSP26) from Homo sapiens (Human).